The following is a 254-amino-acid chain: K88 minor fimbrial subunit FaeI (254 aa).

The N-terminal stretch at 1–20 is a signal peptide; that stretch reads MKKVTLFLFVVSLLPSTVLA.

The protein belongs to the fimbrial K88 protein family.

The protein localises to the fimbrium. Functionally, K88 minor fimbrial subunit, plays an essential role in the biogenesis of the K88 fimbriae. Fimbriae (also called pili), are polar filaments radiating from the surface of the bacterium to a length of 0.5-1.5 micrometers and numbering 100-300 per cell. They enable bacteria to colonize the epithelium of specific host organs. In Escherichia coli, this protein is K88 minor fimbrial subunit FaeI (faeI).